Consider the following 634-residue polypeptide: DNA-directed RNA polymerase subunit gamma (634 aa).

4 residues coordinate Zn(2+): C74, C76, C89, and C92. Positions 471, 473, and 475 each coordinate Mg(2+).

Belongs to the RNA polymerase beta' chain family. RpoC1 subfamily. In terms of assembly, in cyanobacteria the RNAP catalytic core is composed of 2 alpha, 1 beta, 1 beta', 1 gamma and 1 omega subunit. When a sigma factor is associated with the core the holoenzyme is formed, which can initiate transcription. It depends on Mg(2+) as a cofactor. Requires Zn(2+) as cofactor.

The catalysed reaction is RNA(n) + a ribonucleoside 5'-triphosphate = RNA(n+1) + diphosphate. DNA-dependent RNA polymerase catalyzes the transcription of DNA into RNA using the four ribonucleoside triphosphates as substrates. The protein is DNA-directed RNA polymerase subunit gamma of Synechococcus sp. (strain RCC307).